The following is a 158-amino-acid chain: MKLDRYDLKILEILSRDGRITKSKLAEAINLSVSPCWERVRRLEKAGVIEGYGARLNTDVLVKRTPVWVQIELKAHNAESFARFEALVHDTPEVTECVAVGGGVDYLVKFEATTIDTYQRLIDEWLVSDVGIERYFTYIVTKTVKRPSASISIDDLAT.

The 62-residue stretch at 3–64 (LDRYDLKILE…RLNTDVLVKR (62 aa)) folds into the HTH asnC-type domain. A DNA-binding region (H-T-H motif) is located at residues 22 to 41 (KSKLAEAINLSVSPCWERVR).

The protein resides in the cytoplasm. Its function is as follows. Acts as a transcriptional regulator. It binds DNA specifically to a fragment from the doeA promoter region. In Halomonas elongata (strain ATCC 33173 / DSM 2581 / NBRC 15536 / NCIMB 2198 / 1H9), this protein is Transcriptional regulatory protein DoeX (doeX).